Here is a 504-residue protein sequence, read N- to C-terminus: Anaerobic nitric oxide reductase transcription regulator NorR (504 aa).

Asp-57 carries the 4-aspartylphosphate modification. In terms of domain architecture, Sigma-54 factor interaction spans 187-416 (MIGLSPGMTQ…LEHAIHRAVV (230 aa)). ATP contacts are provided by residues 215–222 (GETGTGKE) and 278–287 (ADNGTLFLDE). The H-T-H motif DNA-binding region spans 479 to 498 (WAACARMLETDVANLHRLAK).

The protein operates within nitrogen metabolism; nitric oxide reduction. Functionally, required for the expression of anaerobic nitric oxide (NO) reductase, acts as a transcriptional activator for at least the norVW operon. Activation also requires sigma-54. The protein is Anaerobic nitric oxide reductase transcription regulator NorR of Escherichia coli O81 (strain ED1a).